The following is a 415-amino-acid chain: Gamma-glutamyl phosphate reductase (415 aa).

It belongs to the gamma-glutamyl phosphate reductase family.

The protein localises to the cytoplasm. It catalyses the reaction L-glutamate 5-semialdehyde + phosphate + NADP(+) = L-glutamyl 5-phosphate + NADPH + H(+). It functions in the pathway amino-acid biosynthesis; L-proline biosynthesis; L-glutamate 5-semialdehyde from L-glutamate: step 2/2. Functionally, catalyzes the NADPH-dependent reduction of L-glutamate 5-phosphate into L-glutamate 5-semialdehyde and phosphate. The product spontaneously undergoes cyclization to form 1-pyrroline-5-carboxylate. The polypeptide is Gamma-glutamyl phosphate reductase (Pseudoalteromonas translucida (strain TAC 125)).